The chain runs to 1129 residues: Egg-laying defective protein 27 (1129 aa).

Positions 1–11 are enriched in polar residues; it reads MSRFDSQCSSE. Residues 1–43 are disordered; the sequence is MSRFDSQCSSEDVNKEDECVPSSSEDSQDGVSSPMENDDEPEF. A compositionally biased stretch (low complexity) spans 22–33; that stretch reads SSSEDSQDGVSS. Positions 87–223 constitute a BAH domain; it reads TLYRLRDSVF…QDSTKLASTH (137 aa). Positions 224–327 constitute an ELM2 domain; that stretch reads YAIRVGTSFQ…DALSELNAND (104 aa). Residues 332 to 384 enclose the SANT domain; it reads TDVDNMTQDDAKKFAKGIKQLGKNFSRIHRELLPHHSREQLVSYYYLWKKTPE. The segment at 388 to 434 is disordered; it reads PKQAARRVNPTSIKRPTKEKVKASRPTSTEYLDFDSASESDVENNGP. Over residues 419 to 429 the composition is skewed to acidic residues; it reads LDFDSASESDV. A GATA-type; atypical zinc finger spans residues 439–485; that stretch reads CHHCYGAESKDWHHANGLLLCTDCRLHYKKYGQLRQIANRPSQVPAC. 5 disordered regions span residues 488 to 636, 693 to 717, 790 to 814, 899 to 950, and 982 to 1040; these read KRSN…DPMP, RDETNGETNSDLKDDENVEPDSPED, QQNQIKKEQQQSQPTPQQIHQQQAQ, MIAE…HAAA, and MAAQ…REHA. Polar residues-rich tracts occupy residues 525-545 and 561-573; these read PSTVSNGAPNLTAEETPTKKL and VINNVEKSNSSEE. Acidic residues-rich tracts occupy residues 613-634 and 705-717; these read SYDDDDDEEEGKMTIDEGDDDP and KDDENVEPDSPED. Residues 899-914 show a composition bias toward low complexity; sequence MIAEQQQQQRHAAAQQ. Over residues 915–932 the composition is skewed to basic and acidic residues; the sequence is LREREQREQRERERERQH. Composition is skewed to low complexity over residues 933-950 and 983-999; these read QQQAQQALHQQQQQHAAA and AAQQQQQQQQAAQAQAQ. The span at 1000–1040 shows a compositional bias: basic and acidic residues; it reads RDQERERREREAREREAAREREREQAAREAAARDQAAREHA.

As to quaternary structure, interacts with ceh-6, sem-4 and sox-2. Interacts with wdr-5.1. In terms of tissue distribution, expression detected in anterior intestine and head region.

The protein localises to the nucleus. In terms of biological role, transcription factor which promotes stress survival and delays aging. Required for cell cycle progression and development of the mesodermal and endodermal embryonic lineages. Required for normal T-cell polarity, for correct migration of QL neuroblast descendants and other cells, for embryonic patterning and for the embryonic expression of hlh-8. Also required for the transdifferentiation of the Y rectal epithelial cell to the PDA motor neuron during larval development. The sequence is that of Egg-laying defective protein 27 from Caenorhabditis elegans.